A 447-amino-acid polypeptide reads, in one-letter code: NADH peroxidase (447 aa).

Residues 7 to 11 (GSSHG), Glu32, Cys42, 110 to 113 (SPGA), and Arg132 each bind FAD. His10 acts as the Proton acceptor in catalysis. The active-site Redox-active is Cys42. Position 42 is a cysteine sulfenic acid (-SOH) (Cys42). The NAD(+) site is built by Ile160, Asp179, Tyr188, and Gly243. Asp281 is a binding site for FAD. Position 297 (Ala297) interacts with NAD(+). Position 299 (Ala299) interacts with FAD. Residue Gly328 participates in NAD(+) binding.

The protein belongs to the class-III pyridine nucleotide-disulfide oxidoreductase family. As to quaternary structure, homotetramer. FAD is required as a cofactor.

The enzyme catalyses H2O2 + NADH + H(+) = NAD(+) + 2 H2O. In terms of biological role, peroxidase whose active site is a redox-active cysteine-sulfenic acid. The chain is NADH peroxidase (npr) from Enterococcus faecalis (strain ATCC 700802 / V583).